The chain runs to 202 residues: Matrix protein (202 aa).

The short motif at proline 35–tyrosine 38 is the PPXY motif element. The interval lysine 115–valine 151 is essential for glycoprotein binding.

This sequence belongs to the lyssavirus matrix protein family. In terms of assembly, homomultimer. Interacts with nucleoprotein and with the cytoplasmic domain of glycoprotein. Interacts with host ATP6V1A; this interaction plays an important role in virion uncoating after viral entry.

Its subcellular location is the virion membrane. The protein localises to the host endomembrane system. It localises to the host cytoplasm. In terms of biological role, plays a major role in assembly, budding and uncoating of virion after membrane fusion. Completely covers the ribonucleoprotein coil and keep it in condensed bullet-shaped form. Inhibits viral transcription and stimulates replication. Plays a major role in early induction of TRAIL-mediated apoptosis in infected neurons. Inhibits the integrated stress response (ISR) in the infected cell by blocking the formation of stress granules. The protein is Matrix protein (M) of Rabies virus (strain CVS-11) (RABV).